Reading from the N-terminus, the 507-residue chain is Glycosyltransferase family 92 protein C33H5.2 (507 aa).

The chain crosses the membrane as a helical span at residues 6-26 (VILVFCASFALFFTFIIFGRY). The 290-residue stretch at 155–444 (RDVVMCIAPL…LKCYNEKFYD (290 aa)) folds into the GT92 domain.

This sequence belongs to the glycosyltransferase 92 family.

The protein localises to the membrane. The protein is Glycosyltransferase family 92 protein C33H5.2 of Caenorhabditis elegans.